A 408-amino-acid chain; its full sequence is LIN1-like protein (408 aa).

Residues 1 to 161 (MKRTLRNPGN…SVPSSPKRMS (161 aa)) are disordered. A compositionally biased stretch (acidic residues) spans 41–52 (YYESESEEDEDQ). Basic and acidic residues-rich tracts occupy residues 53 to 62 (ILNKEKKEGQ), 73 to 109 (DEKR…KEVL), and 119 to 129 (NGKYSKLRYED). Positions 344–402 (SSQYNFKWEFDDKTYGPYTASQIQAWSNEGYFTDAKHAAFIQLANMDEWMYPNNICFCD) constitute a GYF domain.

Belongs to the LIN1 family.

The chain is LIN1-like protein from Schizosaccharomyces pombe (strain 972 / ATCC 24843) (Fission yeast).